We begin with the raw amino-acid sequence, 581 residues long: Multidrug resistance-like ATP-binding protein MdlA (581 aa).

Residues 18-303 (YLGSIILLII…LAWMFNIVER (286 aa)) form the ABC transmembrane type-1 domain. Helical transmembrane passes span 23-43 (ILLIIIAFLQLLPPKIIGILI), 53-73 (GFEILPWISIILLIAIIVYIL), 127-149 (VVFAAGEGVLTLVDSSVMGISVL), 153-175 (ITQISWLLTIISLIPMPIMAILI), 247-267 (VIYLSVAFSNLLAITAGGWLV), and 280-300 (FIMYLGLMIWPMLALAWMFNI). The 235-residue stretch at 337–571 (INIDMFFYPK…KNWYKSMYDH (235 aa)) folds into the ABC transporter domain. 369-376 (GPTGAGKS) lines the ATP pocket.

The protein belongs to the ABC transporter superfamily. Drug exporter-2 (TC 3.A.1.117) family.

It localises to the cell membrane. It carries out the reaction ATP + H2O + xenobioticSide 1 = ADP + phosphate + xenobioticSide 2.. In Buchnera aphidicola subsp. Schizaphis graminum (strain Sg), this protein is Multidrug resistance-like ATP-binding protein MdlA (mdlA).